A 183-amino-acid polypeptide reads, in one-letter code: Putative manganese efflux pump MntP 1 (183 aa).

Transmembrane regions (helical) follow at residues 6 to 26 (LFLLALAISLDAFGVILCIGI), 36 to 56 (IIFVFSFGFFQFFLSFLGGYI), 64 to 84 (IVPIPTIVGGLIIIIVGILMI), 100 to 120 (IMYLILGVSVSIDALVIGFTT), 130 to 150 (LFMSSLFMGLIATIICSLGII), and 158 to 178 (ISIISSYADYIGGIILILFGL).

The protein belongs to the MntP (TC 9.B.29) family.

It is found in the cell membrane. Its function is as follows. Probably functions as a manganese efflux pump. The chain is Putative manganese efflux pump MntP 1 from Clostridium botulinum (strain Langeland / NCTC 10281 / Type F).